Here is a 344-residue protein sequence, read N- to C-terminus: C-C chemokine receptor-like 2 (344 aa).

Residues 1–43 lie on the Extracellular side of the membrane; sequence MANYTLAPEDEYDVLIEGELESDEAEQCDKYDAQALSAQLVPS. Asparagine 3 carries an N-linked (GlcNAc...) asparagine glycan. A helical transmembrane segment spans residues 44-64; the sequence is LCSAVFVIGVLDNLLVVLILV. Over 65–74 the chain is Cytoplasmic; the sequence is KYKGLKRVEN. Residues 75 to 95 form a helical membrane-spanning segment; the sequence is IYLLNLAVSNLCFLLTLPFWA. Residues 96–104 lie on the Extracellular side of the membrane; that stretch reads HAGGDPMCK. Cysteine 103 and cysteine 181 are joined by a disulfide. The helical transmembrane segment at 105-125 threads the bilayer; the sequence is ILIGLYFVGLYSETFFNCLLT. Residues 126-144 lie on the Cytoplasmic side of the membrane; that stretch reads VQRYLVFLHKGNFFSARRR. The helical transmembrane segment at 145–165 threads the bilayer; sequence VPCGIITSVLAWVTAILATLP. Residues 166 to 198 lie on the Extracellular side of the membrane; it reads EFVVYKPQMEDQKYKCAFSRTPFLPADETFWKH. A helical membrane pass occupies residues 199–219; it reads FLTLKMNISVLVLPLFIFTFL. At 220-238 the chain is on the cytoplasmic side; it reads YVQMRKTLRFREQRYSLFK. A helical transmembrane segment spans residues 239–259; that stretch reads LVFAIMVVFLLMWAPYNIAFF. Over 260–286 the chain is Extracellular; that stretch reads LSTFKEHFSLSDCKSSYNLDKSVHITK. The chain crosses the membrane as a helical span at residues 287–307; sequence LIATTHCCINPLLYAFLDGTF. Residues 308-344 lie on the Cytoplasmic side of the membrane; the sequence is SKYLCRCFHLRSNTPLQPRGQSAQGTSREEPDHSTEV. Residues 324–333 show a composition bias toward polar residues; that stretch reads QPRGQSAQGT. The segment at 324 to 344 is disordered; the sequence is QPRGQSAQGTSREEPDHSTEV. A compositionally biased stretch (basic and acidic residues) spans 334 to 344; that stretch reads SREEPDHSTEV.

Belongs to the G-protein coupled receptor 1 family. As to expression, expressed abundantly in immunal tissues such as spleen, fetal liver, lymph node and bone marrow. Strong expression also in lung and heart. Expressed in almost all hematopoietic cells including monocytes, macrophages, PMNs, T-cells (both CD4+ and CD8+), monocyte-derived iDCs, NK cells, and CD34+ progenitor cells. B-cells expressed isoform 1 but not isoform 2. Up-regulated on synovial neutrophils of rheumatoid arthritis patients.

The protein localises to the cell membrane. Receptor for CCL19 and chemerin/RARRES2. Does not appear to be a signaling receptor, but may have a role in modulating chemokine-triggered immune responses by capturing and internalizing CCL19 or by presenting RARRES2 ligand to CMKLR1, a functional signaling receptors. Plays a critical role for the development of Th2 responses. This chain is C-C chemokine receptor-like 2 (CCRL2), found in Homo sapiens (Human).